Reading from the N-terminus, the 153-residue chain is ORM1-like protein 3 (153 aa).

The tract at residues 1–17 (MNVGTAHSEVNPNTRVM) is important for ceramide level-sensing. Residues 1–21 (MNVGTAHSEVNPNTRVMNSRG) are Cytoplasmic-facing. Helical transmembrane passes span 22 to 42 (IWLSYVLAIGLLHVVLLSIPF) and 43 to 63 (VSVPVVWTLTNLIHNTGMYIF). Topologically, residues 64–94 (LHTVKGTPFETPDQGKARLLTHWEQMDYGVQ) are cytoplasmic. A helical membrane pass occupies residues 95-117 (FTASRKFLTITPIVLYFLTSFYT). At 118–121 (KYDQ) the chain is on the extracellular side. A helical transmembrane segment spans residues 122 to 142 (IHFVLNTVSLMSVLIPKLPQL). P137 is modified (hydroxyproline). Residues 143–153 (HGVRIFGINKY) are Cytoplasmic-facing.

Belongs to the ORM family. As to quaternary structure, ceramide-sensitive subunit of the serine palmitoyltransferase (SPT) complex, which is also composed of SPTLC1, SPTLC2/3 and SPTSSA/B. When hydroxylated at Pro-137, ubiquitinated via 'Lys-48'-linkage, leading to proteasomal degradation. In endothelial cells, ORMDL3 proteasomal degradation is controlled by the sphingosine 1-phosphate receptor signaling pathway.

The protein resides in the endoplasmic reticulum membrane. In terms of biological role, plays an essential role in the homeostatic regulation of sphingolipid de novo biosynthesis by modulating the activity of the serine palmitoyltransferase (SPT) in response to ceramide levels. When complexed to SPT, the binding of ceramides to its N-terminus stabilizes a conformation that block SPT substrate entry, hence preventing SPT catalytic activity. Through this mechanism, maintains ceramide levels at sufficient concentrations for the production of complex sphingolipids, but which prevents the accumulation of ceramides to levels that trigger apoptosis. This is ORM1-like protein 3 (ORMDL3) from Ailuropoda melanoleuca (Giant panda).